A 510-amino-acid chain; its full sequence is MNNKSISPIILMILDGWGHSTNAKGNAIHEANTPIIDKLWDNYPKTLLSASGEHVGLPHKQMGNSEVGHTTIGAGRIINQDLVKISKSIKNKEFFNNYQLHNIYKYSCEKNSKVHIVGLCSNGGVHSHINHLKALIQISKQYKVMTCLHLITDGRDTLPKQAKLFVKEIIDIIDENYNTEICTISGRYYSMDRDCRWSRTEKAYKAMVENSCNQNSSSDILSIIDKYYEQNISDEFLPPTKISMHNIVHNDSLIFFNFRPDRIRQLLHSFAKPNFKGFQRKTIKNLMLTTFTEYDSTLSIPTVFPNEPKKNFLGQIISNSGLKQLRLAETEKYAHVTYFFNGGIEEPFPGENRELIASPKVETYDLPPEMSAYQLTNSLIEAINKQLYQFIVINYANPDMIGHTGNMNATIEAIEIVDQCIEKVLHTIEDTNNILIITSDHGNADYMLTDENKPCTSHSINPVPFILINNRQKKQTNLHSHGSLADIAPTILDILNINIPNEMNGKSLIT.

Asp15 and Ser65 together coordinate Mn(2+). Ser65 serves as the catalytic Phosphoserine intermediate. Substrate is bound by residues His126, 155–156 (RD), Arg187, Arg193, 259–262 (RPDR), and Lys332. Residues Asp399, His403, Asp440, His441, and His458 each contribute to the Mn(2+) site.

The protein belongs to the BPG-independent phosphoglycerate mutase family. Requires Mn(2+) as cofactor.

It is found in the plastid. Its subcellular location is the chloroplast. The enzyme catalyses (2R)-2-phosphoglycerate = (2R)-3-phosphoglycerate. Its pathway is carbohydrate degradation; glycolysis; pyruvate from D-glyceraldehyde 3-phosphate: step 3/5. Catalyzes the interconversion of 2-phosphoglycerate and 3-phosphoglycerate. The chain is 2,3-bisphosphoglycerate-independent phosphoglycerate mutase from Antithamnion sp. (Red alga).